The following is a 2089-amino-acid chain: Mediator of DNA damage checkpoint protein 1 (2089 aa).

Residues 1 to 19 (MEDTQAIDWDVEEEEETEQ) are compositionally biased toward acidic residues. The segment at 1–22 (MEDTQAIDWDVEEEEETEQSSE) is disordered. Residues 1 to 150 (MEDTQAIDWD…SRGPLTVEET (150 aa)) form an interaction with CHEK2 region. Residues 2–220 (EDTQAIDWDV…PFAFNLNSDT (219 aa)) form an interaction with the MRN complex region. At Thr-4 the chain carries Phosphothreonine; by ATM. Positions 54–105 (NVVGRMPDCSVALPFPSISKQHAEIEILAWDKAPILRDCGSLNGTQILRPPK) constitute an FHA domain. The residue at position 108 (Ser-108) is a Phosphoserine. Residues 145 to 568 (LTVEETPRVQ…PAKLLVVSLE (424 aa)) form a required for nuclear localization (NLS1) region. Thr-146 is modified (phosphothreonine). Ser-168 is modified (phosphoserine; by CK2). Ser-176 bears the Phosphoserine mark. Disordered stretches follow at residues 185–248 (RTTS…AKQS), 261–280 (DQPL…GAGN), and 286–317 (GVIL…AEVH). A phosphoserine; by CK2 mark is found at Ser-196 and Ser-218. Thr-220 carries the post-translational modification Phosphothreonine; by CK2. Over residues 261–274 (DQPLVKERDNDTKV) the composition is skewed to basic and acidic residues. The residue at position 299 (Ser-299) is a Phosphoserine; by CK2. The residue at position 301 (Thr-301) is a Phosphothreonine; by CK2. The segment covering 306 to 317 (DSRPPGRPAEVH) has biased composition (basic and acidic residues). Ser-329 is modified (phosphoserine; by CK2). Thr-331 carries the post-translational modification Phosphothreonine; by CK2. Ser-372 carries the post-translational modification Phosphoserine. At Ser-376 the chain carries Phosphoserine; by CK2. Thr-378 carries the phosphothreonine; by CK2 modification. Ser-394 and Ser-397 each carry phosphoserine. Residue Ser-402 is modified to Phosphoserine; by CK2. At Thr-404 the chain carries Phosphothreonine; by CK2. At Ser-411 the chain carries Phosphoserine. Thr-449 carries the phosphothreonine modification. Ser-453 is modified (phosphoserine; by CK2). Thr-455 bears the Phosphothreonine; by CK2 mark. The tract at residues 482 to 515 (RAHSEKDQPPFGDSDDSVEADKSSPGIHLERSQA) is disordered. Phosphoserine occurs at positions 485, 495, 498, 504, 505, and 513. A Phosphothreonine modification is found at Thr-523. Ser-590 is subject to Phosphoserine. Lys-616 is covalently cross-linked (Glycyl lysine isopeptide (Lys-Gly) (interchain with G-Cter in SUMO1); alternate). A Glycyl lysine isopeptide (Lys-Gly) (interchain with G-Cter in SUMO2); alternate cross-link involves residue Lys-616. Disordered stretches follow at residues 653 to 689 (DTLG…DNYG) and 780 to 1887 (SPPR…TKLN). Residues 671 to 685 (GREREQHVGGTKDSE) are compositionally biased toward basic and acidic residues. Phosphoserine is present on residues Ser-780 and Ser-793. Lys-812 bears the N6-acetyllysine mark. Basic and acidic residues-rich tracts occupy residues 819 to 844 (ETAE…ERQT), 851 to 862 (ELTKGKQDREQK), 868 to 905 (DTQR…EKQV), and 914 to 951 (AFER…RGEP). A phosphoserine mark is found at Ser-955 and Ser-998. The segment covering 955-965 (SQDQKGQASSP) has biased composition (polar residues). Residues 1016-1031 (KASRIRAAEKVSRGDQ) are compositionally biased toward basic and acidic residues. Phosphoserine is present on Ser-1033. Residues 1040–1051 (PTVPEAPAPPQK) show a composition bias toward pro residues. Phosphoserine is present on residues Ser-1068 and Ser-1086. Basic residues predominate over residues 1103–1113 (PKPKIRTRKSS). The segment covering 1129–1156 (PSTSTAQPVTPKPTSQATRSRTNRSSVK) has biased composition (polar residues). The segment at 1148–1610 (SRTNRSSVKT…TNRSSVKTPE (463 aa)) is interaction with the PRKDC complex. Thr-1157 bears the Phosphothreonine mark. Positions 1169 to 1187 (QPSTSTDQPVTSEPTSQVT) are enriched in polar residues. Thr-1198 carries the phosphothreonine modification. The span at 1210–1228 (QPSTSTDRPVTSEPTSQAT) shows a compositional bias: polar residues. At Ser-1235 the chain carries Phosphoserine. Residue Thr-1239 is modified to Phosphothreonine. Over residues 1251 to 1268 (QPSTSTDQPVTSEPTYQA) the composition is skewed to polar residues. 2 positions are modified to phosphothreonine: Thr-1280 and Thr-1302. 2 stretches are compositionally biased toward low complexity: residues 1304–1318 (KPTS…NMSS) and 1347–1359 (TSRT…NMSS). A compositionally biased stretch (polar residues) spans 1375–1391 (PSTSTEQPVTPEPTSRA). Ser-1399 and Ser-1400 each carry phosphoserine. The residue at position 1402 (Lys-1402) is an N6-acetyllysine. At Thr-1403 the chain carries Phosphothreonine. Lys-1413 is covalently cross-linked (Glycyl lysine isopeptide (Lys-Gly) (interchain with G-Cter in SUMO1); alternate). Lys-1413 is covalently cross-linked (Glycyl lysine isopeptide (Lys-Gly) (interchain with G-Cter in SUMO2); alternate). Polar residues-rich tracts occupy residues 1416 to 1444 (PSTS…SVKT), 1456 to 1475 (QPST…QATR), 1498 to 1514 (ASAS…TSRT), and 1538 to 1555 (QPST…TSRA). A phosphothreonine mark is found at Thr-1425 and Thr-1466. Thr-1548 is modified (phosphothreonine). At Ser-1564 the chain carries Phosphoserine. Thr-1567 and Thr-1589 each carry phosphothreonine. Residues 1579 to 1596 (QPSTSRNQLVTPEPTSRA) are compositionally biased toward polar residues. Phosphoserine is present on Ser-1604. Position 1608 is a phosphothreonine (Thr-1608). Over residues 1611-1620 (PVVPTAPEPH) the composition is skewed to pro residues. The segment covering 1624 to 1636 (STDQPVTPKLTSR) has biased composition (polar residues). 3 positions are modified to phosphothreonine: Thr-1630, Thr-1664, and Thr-1671. A compositionally biased stretch (polar residues) spans 1678–1689 (GGQSKTLRSSTV). Ser-1681 bears the Phosphoserine mark. Phosphothreonine is present on Thr-1697. Positions 1698–1719 (PEFQSPVTTDQPISPEPITQPS) are enriched in polar residues. Residues 1698-2089 (PEFQSPVTTD…VLSPLEMSST (392 aa)) form a required for nuclear localization (NLS2) region. Ser-1702 and Ser-1711 each carry phosphoserine. A Glycyl lysine isopeptide (Lys-Gly) (interchain with G-Cter in SUMO2) cross-link involves residue Lys-1740. Ser-1775 carries the post-translational modification Phosphoserine. A Glycyl lysine isopeptide (Lys-Gly) (interchain with G-Cter in SUMO2) cross-link involves residue Lys-1790. Thr-1800 is modified (phosphothreonine). The residue at position 1820 (Ser-1820) is a Phosphoserine. Residues 1823–1836 (HQKQPQRGEVSQKT) show a composition bias toward polar residues. A Glycyl lysine isopeptide (Lys-Gly) (interchain with G-Cter in SUMO1); alternate cross-link involves residue Lys-1840. Lys-1840 is covalently cross-linked (Glycyl lysine isopeptide (Lys-Gly) (interchain with G-Cter in SUMO2); alternate). The segment covering 1847–1857 (AEKPGKEEDVV) has biased composition (basic and acidic residues). A Phosphothreonine modification is found at Thr-1858. BRCT domains follow at residues 1892–1970 (APKV…EYVV) and 1991–2082 (RERR…FVLS). Arg-1943 bears the Omega-N-methylarginine mark.

In terms of assembly, homodimer. Interacts with H2AX, which requires phosphorylation of H2AX on 'Ser-139'. Interacts with the MRN complex, composed of MRE11, RAD50, and NBN. Interacts with CHEK2, which requires ATM-mediated phosphorylation of 'Thr-68' within the FHA domain of CHEK2. Interacts constitutively with the BRCA1-BARD1 complex, SMC1A and TP53BP1. Interacts with ATM and FANCD2, and these interactions are reduced upon DNA damage. Also interacts with the PRKDC complex, composed of XRCC6/KU70, XRCC5/KU80 and PRKDC/XRCC7. This interaction may be required for PRKDC autophosphorylation, which is essential for DNA double strand break (DSB) repair. When phosphorylated by ATM, interacts with RNF8 (via FHA domain). Interacts with CEP164. When phosphorylated, interacts with APTX (via FHA-like domain). Interacts (when phosphorylated) with TOPBP1; promoting TOPBP1 localization to DNA damage sites during mitosis. Interacts (when phosphorylated) with NBN; promoting NBN and MRN complex localization to DNA damage sites. Phosphorylated upon exposure to ionizing radiation (IR), ultraviolet radiation (UV), and hydroxyurea (HU). Phosphorylation in response to IR requires ATM, NBN, and possibly CHEK2. Also phosphorylated during the G2/M phase of the cell cycle and during activation of the mitotic spindle checkpoint. Phosphorylation at Thr-4 by ATM stabilizes and enhances homodimerization via the FHA domain. Phosphorylated at Ser-168 and Ser-196 by CK2 in response to DNA damage during mitosis, promoting interaction with TOPBP1. Phosphorylated by CK2 in response to DNA damage, promoting interaction with NBN and recruitment of the MRN complex to DNA damage sites. Post-translationally, sumoylation at Lys-1840 by PIAS4 following DNA damage promotes ubiquitin-mediated degradation. In terms of processing, ubiquitinated by RNF4, leading to proteasomal degradation; undergoes 'Lys-48'-linked polyubiquitination. As to expression, highly expressed in testis.

The protein localises to the nucleus. It is found in the chromosome. In terms of biological role, histone reader protein required for checkpoint-mediated cell cycle arrest in response to DNA damage within both the S phase and G2/M phases of the cell cycle. Specifically recognizes and binds histone H2AX phosphorylated at 'Ser-139', a marker of DNA damage, serving as a scaffold for the recruitment of DNA repair and signal transduction proteins to discrete foci of DNA damage sites. Also required for downstream events subsequent to the recruitment of these proteins. These include phosphorylation and activation of the ATM, CHEK1 and CHEK2 kinases, and stabilization of TP53/p53 and apoptosis. ATM and CHEK2 may also be activated independently by a parallel pathway mediated by TP53BP1. Required for chromosomal stability during mitosis by promoting recruitment of TOPBP1 to DNA double strand breaks (DSBs): TOPBP1 forms filamentous assemblies that bridge MDC1 and tether broken chromosomes during mitosis. Required for the repair of DSBs via homologous recombination by promoting recruitment of NBN component of the MRN complex to DSBs. The protein is Mediator of DNA damage checkpoint protein 1 of Homo sapiens (Human).